The sequence spans 96 residues: Small ribosomal subunit protein bS6 (96 aa).

It belongs to the bacterial ribosomal protein bS6 family.

In terms of biological role, binds together with bS18 to 16S ribosomal RNA. This is Small ribosomal subunit protein bS6 from Streptococcus equi subsp. zooepidemicus (strain MGCS10565).